The following is a 271-amino-acid chain: Centromere protein K (271 aa).

Coiled-coil stretches lie at residues 11 to 44 (DTIT…QNKL) and 102 to 151 (LRCD…VENQ).

It belongs to the CENP-K/MCM22 family. Component of the CENPA-CAD complex, composed of CENPI, CENPK, CENPL, CENPO, CENPP, CENPQ, CENPR and CENPS. The CENPA-CAD complex interacts with the CENPA-NAC complex, at least composed of CENPA, CENPC, CENPH, CENPM, CENPN, CENPT and CENPU. May interact with Sox6. In terms of tissue distribution, highly expressed in testis.

It is found in the nucleus. The protein localises to the chromosome. Its subcellular location is the centromere. The protein resides in the kinetochore. In terms of biological role, component of the CENPA-CAD (nucleosome distal) complex, a complex recruited to centromeres which is involved in assembly of kinetochore proteins, mitotic progression and chromosome segregation. May be involved in incorporation of newly synthesized CENPA into centromeres via its interaction with the CENPA-NAC complex. Acts in coordination with KNL1 to recruit the NDC80 complex to the outer kinetochore. In Mus musculus (Mouse), this protein is Centromere protein K (Cenpk).